A 22-amino-acid chain; its full sequence is Chitin-binding protein 3 (22 aa).

In terms of processing, glycosylated; contains 2.5% carbohydrates.

Functionally, chitin-binding protein. Has antifungal activity against F.solani, F.oxysporum, C.musae and C.gloesporoides but not against P.oligandrum. Depending on concentration the antifungal activity can be fungistatic or fungicidal. Inhibits both spore germination and mycelial growth in F.solani at a concentration of 0.1 mg/ml. Has antifungal activity against C.krusei, C.albicans, C.tropicalis and C.parapsilosis. Has no chitinase, beta-glucanase or hemagglutinating activity. Acts as a flocculent. This chain is Chitin-binding protein 3, found in Moringa oleifera (Horseradish tree).